The chain runs to 218 residues: Thiopurine S-methyltransferase (218 aa).

Tryptophan 10, leucine 45, glutamate 66, and arginine 123 together coordinate S-adenosyl-L-methionine.

Belongs to the class I-like SAM-binding methyltransferase superfamily. TPMT family.

Its subcellular location is the cytoplasm. The catalysed reaction is S-adenosyl-L-methionine + a thiopurine = S-adenosyl-L-homocysteine + a thiopurine S-methylether.. The protein is Thiopurine S-methyltransferase of Pseudomonas paraeruginosa (strain DSM 24068 / PA7) (Pseudomonas aeruginosa (strain PA7)).